The chain runs to 80 residues: U-poneritoxin(01)-Om3a (80 aa).

Positions 1–25 (MKPSGLALAFLVVFMMAIMYNSVQA) are cleaved as a signal peptide. A propeptide spanning residues 26–39 (AAIADADAEAEAIA) is cleaved from the precursor.

It belongs to the formicidae venom precursor-01 superfamily. Truncated sequences of this peptide have also been found in the venom. It is possible they have been cleaved in the venom. Expressed by the venom gland.

It localises to the secreted. Cationic amphipathic alpha-helical peptide with antimicrobial activities against E.coli (MIC=3.1 uM), S.aureus (MIC=25 uM), and S.cerevisiae (MIC=50 uM). Also shows histamine-releasing activity (37.5% at 10 uM). Does not show hemolytic activity, even at 50 uM. This chain is U-poneritoxin(01)-Om3a, found in Odontomachus monticola (Trap-jaw ant).